The sequence spans 948 residues: Translation initiation factor IF-2 (948 aa).

3 disordered regions span residues 61–120 (IQAN…PALI), 162–243 (KSRE…TQSA), and 255–285 (QEKDKQEAKKAKKPSKPKATPTAKNNKSHKI). The segment covering 68–78 (KNPEQDNKDDL) has biased composition (basic and acidic residues). Positions 173–189 (SNTNNANSTNNANNVNN) are enriched in low complexity. Positions 190 to 207 (AKKEISEVKKQEQEIKRH) are enriched in basic and acidic residues. Residues 208–219 (ENIKRRTGFRVI) are compositionally biased toward basic residues. A compositionally biased stretch (polar residues) spans 230 to 243 (ENSVAESKKPTQSA). Positions 447-616 (ERPPVVTIMG…LIQADIMELK (170 aa)) constitute a tr-type G domain. The tract at residues 456–463 (GHVDHGKT) is G1. Residue 456-463 (GHVDHGKT) coordinates GTP. Positions 481–485 (GITQH) are G2. The tract at residues 502-505 (DTPG) is G3. GTP is bound by residues 502-506 (DTPGH) and 556-559 (NKMD). The interval 556–559 (NKMD) is G4. The segment at 592-594 (SAK) is G5.

The protein belongs to the TRAFAC class translation factor GTPase superfamily. Classic translation factor GTPase family. IF-2 subfamily.

It localises to the cytoplasm. Functionally, one of the essential components for the initiation of protein synthesis. Protects formylmethionyl-tRNA from spontaneous hydrolysis and promotes its binding to the 30S ribosomal subunits. Also involved in the hydrolysis of GTP during the formation of the 70S ribosomal complex. This Helicobacter pylori (strain Shi470) protein is Translation initiation factor IF-2.